A 227-amino-acid chain; its full sequence is GTP:AMP phosphotransferase AK3, mitochondrial (227 aa).

The GTP site is built by G17, G19, K20, G21, and T22. An N6-succinyllysine modification is found at K20. K29 carries the post-translational modification N6-acetyllysine; alternate. Position 29 is an N6-succinyllysine; alternate (K29). K34 carries the N6-acetyllysine modification. S37 carries the post-translational modification Phosphoserine. The segment at 37–66 (SSGDLLRQNMLQGTEIAVLAKSFIDQGKLI) is NMP. Residues S38 and R43 each contribute to the AMP site. The residue at position 57 (K57) is an N6-succinyllysine. An N6-acetyllysine; alternate mark is found at K64 and K80. 2 positions are modified to N6-succinyllysine; alternate: K64 and K80. K64 serves as a coordination point for AMP. AMP contacts are provided by G91, R94, and Q98. The interval 127–164 (ARWIHPASGRVYNIEFNPPKTVGIDDLTGEPLIQREDD) is LID. Residues R128, Y138, N139, R161, and R172 each coordinate GTP. Residues K174 and K189 each carry the N6-acetyllysine; alternate modification. Residues K174 and K189 each carry the N6-succinyllysine; alternate modification. Residue T201 coordinates GTP. Residue K203 is modified to N6-acetyllysine.

Belongs to the adenylate kinase family. AK3 subfamily. Monomer.

It localises to the mitochondrion matrix. It carries out the reaction a ribonucleoside 5'-triphosphate + AMP = a ribonucleoside 5'-diphosphate + ADP. It catalyses the reaction GTP + AMP = GDP + ADP. The catalysed reaction is ITP + AMP = IDP + ADP. In terms of biological role, mitochondrial adenylate kinase with a specific GTP:AMP phosphotransferase activity. Could also use ITP as phosphate donor. Its physiological function is to recycle GTP into GDP which is necessary for the TCA cycle in the mitochondrial matrix. The polypeptide is GTP:AMP phosphotransferase AK3, mitochondrial (Rattus norvegicus (Rat)).